A 682-amino-acid chain; its full sequence is DNA-directed RNA polymerase subunit beta' (682 aa).

Zn(2+)-binding residues include Cys69, Cys71, Cys87, and Cys90. Mg(2+) is bound by residues Asp489, Asp491, and Asp493.

It belongs to the RNA polymerase beta' chain family. RpoC1 subfamily. In terms of assembly, in plastids the minimal PEP RNA polymerase catalytic core is composed of four subunits: alpha, beta, beta', and beta''. When a (nuclear-encoded) sigma factor is associated with the core the holoenzyme is formed, which can initiate transcription. The cofactor is Mg(2+). Zn(2+) is required as a cofactor.

The protein resides in the plastid. It localises to the chloroplast. The catalysed reaction is RNA(n) + a ribonucleoside 5'-triphosphate = RNA(n+1) + diphosphate. DNA-dependent RNA polymerase catalyzes the transcription of DNA into RNA using the four ribonucleoside triphosphates as substrates. This chain is DNA-directed RNA polymerase subunit beta', found in Hordeum vulgare (Barley).